The primary structure comprises 400 residues: Tryptophan 2,3-dioxygenase (400 aa).

Residues 75-79 (FIIIH) and Arg146 contribute to the substrate site. Heme is bound at residue His332. Position 346 (Thr346) interacts with substrate.

The protein belongs to the tryptophan 2,3-dioxygenase family. Homotetramer. Dimer of dimers. Heme is required as a cofactor.

It catalyses the reaction L-tryptophan + O2 = N-formyl-L-kynurenine. Its pathway is amino-acid degradation; L-tryptophan degradation via kynurenine pathway; L-kynurenine from L-tryptophan: step 1/2. Its function is as follows. Heme-dependent dioxygenase that catalyzes the oxidative cleavage of the L-tryptophan (L-Trp) pyrrole ring and converts L-tryptophan to N-formyl-L-kynurenine. Catalyzes the oxidative cleavage of the indole moiety. The polypeptide is Tryptophan 2,3-dioxygenase (Dictyostelium discoideum (Social amoeba)).